Consider the following 170-residue polypeptide: Transcription factor E (170 aa).

Residues 1–93 enclose the HTH TFE/IIEalpha-type domain; it reads MKDVYLYIVE…TWYVDDEIIK (93 aa).

Belongs to the TFE family. In terms of assembly, monomer. Interaction with RNA polymerase subunits RpoF and RpoE is necessary for Tfe stimulatory transcription activity. Able to interact with Tbp and RNA polymerase in the absence of DNA promoter. Interacts both with the preinitiation and elongation complexes.

Its function is as follows. Transcription factor that plays a role in the activation of archaeal genes transcribed by RNA polymerase. Facilitates transcription initiation by enhancing TATA-box recognition by TATA-box-binding protein (Tbp), and transcription factor B (Tfb) and RNA polymerase recruitment. Not absolutely required for transcription in vitro, but particularly important in cases where Tbp or Tfb function is not optimal. It dynamically alters the nucleic acid-binding properties of RNA polymerases by stabilizing the initiation complex and destabilizing elongation complexes. Seems to translocate with the RNA polymerase following initiation and acts by binding to the non template strand of the transcription bubble in elongation complexes. The chain is Transcription factor E from Pyrobaculum aerophilum (strain ATCC 51768 / DSM 7523 / JCM 9630 / CIP 104966 / NBRC 100827 / IM2).